The chain runs to 458 residues: Bifunctional protein GlmU (458 aa).

Residues 1–232 (MTSSLSVIIL…TFEIEGVNNR (232 aa)) are pyrophosphorylase. Residues 10–13 (LAAG), Lys24, Gln79, 84–85 (GT), 106–108 (YGD), Gly142, Glu157, Asn172, and Asn230 each bind UDP-N-acetyl-alpha-D-glucosamine. Residue Asp108 participates in Mg(2+) binding. Asn230 contacts Mg(2+). The interval 233-253 (QQLASLERTWQGKLVADLQEA) is linker. Positions 254–458 (GVQFADPTRV…KNDFKRPTKK (205 aa)) are N-acetyltransferase. Arg336 and Lys354 together coordinate UDP-N-acetyl-alpha-D-glucosamine. Catalysis depends on His366, which acts as the Proton acceptor. Tyr369 and Asn380 together coordinate UDP-N-acetyl-alpha-D-glucosamine. Acetyl-CoA contacts are provided by residues Ala383, 389 to 390 (NY), Ser408, Ala426, and Arg443.

In the N-terminal section; belongs to the N-acetylglucosamine-1-phosphate uridyltransferase family. It in the C-terminal section; belongs to the transferase hexapeptide repeat family. As to quaternary structure, homotrimer. Mg(2+) serves as cofactor.

It is found in the cytoplasm. The catalysed reaction is alpha-D-glucosamine 1-phosphate + acetyl-CoA = N-acetyl-alpha-D-glucosamine 1-phosphate + CoA + H(+). It catalyses the reaction N-acetyl-alpha-D-glucosamine 1-phosphate + UTP + H(+) = UDP-N-acetyl-alpha-D-glucosamine + diphosphate. It participates in nucleotide-sugar biosynthesis; UDP-N-acetyl-alpha-D-glucosamine biosynthesis; N-acetyl-alpha-D-glucosamine 1-phosphate from alpha-D-glucosamine 6-phosphate (route II): step 2/2. Its pathway is nucleotide-sugar biosynthesis; UDP-N-acetyl-alpha-D-glucosamine biosynthesis; UDP-N-acetyl-alpha-D-glucosamine from N-acetyl-alpha-D-glucosamine 1-phosphate: step 1/1. It functions in the pathway bacterial outer membrane biogenesis; LPS lipid A biosynthesis. In terms of biological role, catalyzes the last two sequential reactions in the de novo biosynthetic pathway for UDP-N-acetylglucosamine (UDP-GlcNAc). The C-terminal domain catalyzes the transfer of acetyl group from acetyl coenzyme A to glucosamine-1-phosphate (GlcN-1-P) to produce N-acetylglucosamine-1-phosphate (GlcNAc-1-P), which is converted into UDP-GlcNAc by the transfer of uridine 5-monophosphate (from uridine 5-triphosphate), a reaction catalyzed by the N-terminal domain. This is Bifunctional protein GlmU from Psychrobacter cryohalolentis (strain ATCC BAA-1226 / DSM 17306 / VKM B-2378 / K5).